Consider the following 239-residue polypeptide: tRNA (guanine-N(1)-)-methyltransferase (239 aa).

S-adenosyl-L-methionine is bound by residues Gly108 and 127 to 132 (LGDYVL).

This sequence belongs to the RNA methyltransferase TrmD family. As to quaternary structure, homodimer.

The protein resides in the cytoplasm. The catalysed reaction is guanosine(37) in tRNA + S-adenosyl-L-methionine = N(1)-methylguanosine(37) in tRNA + S-adenosyl-L-homocysteine + H(+). Functionally, specifically methylates guanosine-37 in various tRNAs. The sequence is that of tRNA (guanine-N(1)-)-methyltransferase from Streptococcus pneumoniae (strain P1031).